We begin with the raw amino-acid sequence, 391 residues long: DNA replication and repair protein RecF (391 aa).

30 to 37 lines the ATP pocket; it reads GSNGQGKT.

This sequence belongs to the RecF family.

Its subcellular location is the cytoplasm. Its function is as follows. The RecF protein is involved in DNA metabolism; it is required for DNA replication and normal SOS inducibility. RecF binds preferentially to single-stranded, linear DNA. It also seems to bind ATP. The polypeptide is DNA replication and repair protein RecF (Saccharopolyspora erythraea (strain ATCC 11635 / DSM 40517 / JCM 4748 / NBRC 13426 / NCIMB 8594 / NRRL 2338)).